We begin with the raw amino-acid sequence, 208 residues long: dITP/XTP pyrophosphatase (208 aa).

15-20 lines the substrate pocket; it reads SHNAGK. Positions 47 and 76 each coordinate Mg(2+). The active-site Proton acceptor is the D76. Residues S77, 157–160, K180, and 185–186 contribute to the substrate site; these read HGYD and HR.

This sequence belongs to the HAM1 NTPase family. Homodimer. Mg(2+) serves as cofactor.

The enzyme catalyses XTP + H2O = XMP + diphosphate + H(+). It carries out the reaction dITP + H2O = dIMP + diphosphate + H(+). The catalysed reaction is ITP + H2O = IMP + diphosphate + H(+). In terms of biological role, pyrophosphatase that catalyzes the hydrolysis of nucleoside triphosphates to their monophosphate derivatives, with a high preference for the non-canonical purine nucleotides XTP (xanthosine triphosphate), dITP (deoxyinosine triphosphate) and ITP. Seems to function as a house-cleaning enzyme that removes non-canonical purine nucleotides from the nucleotide pool, thus preventing their incorporation into DNA/RNA and avoiding chromosomal lesions. This is dITP/XTP pyrophosphatase from Gluconobacter oxydans (strain 621H) (Gluconobacter suboxydans).